A 266-amino-acid chain; its full sequence is Tryptophan synthase alpha chain (266 aa).

Active-site proton acceptor residues include Glu-49 and Asp-60.

The protein belongs to the TrpA family. In terms of assembly, tetramer of two alpha and two beta chains.

The catalysed reaction is (1S,2R)-1-C-(indol-3-yl)glycerol 3-phosphate + L-serine = D-glyceraldehyde 3-phosphate + L-tryptophan + H2O. The protein operates within amino-acid biosynthesis; L-tryptophan biosynthesis; L-tryptophan from chorismate: step 5/5. Functionally, the alpha subunit is responsible for the aldol cleavage of indoleglycerol phosphate to indole and glyceraldehyde 3-phosphate. The sequence is that of Tryptophan synthase alpha chain from Synechococcus elongatus (strain ATCC 33912 / PCC 7942 / FACHB-805) (Anacystis nidulans R2).